A 190-amino-acid polypeptide reads, in one-letter code: Probable nicotinate-nucleotide adenylyltransferase (190 aa).

This sequence belongs to the NadD family.

The catalysed reaction is nicotinate beta-D-ribonucleotide + ATP + H(+) = deamido-NAD(+) + diphosphate. It functions in the pathway cofactor biosynthesis; NAD(+) biosynthesis; deamido-NAD(+) from nicotinate D-ribonucleotide: step 1/1. Catalyzes the reversible adenylation of nicotinate mononucleotide (NaMN) to nicotinic acid adenine dinucleotide (NaAD). The chain is Probable nicotinate-nucleotide adenylyltransferase from Staphylococcus saprophyticus subsp. saprophyticus (strain ATCC 15305 / DSM 20229 / NCIMB 8711 / NCTC 7292 / S-41).